Here is a 421-residue protein sequence, read N- to C-terminus: MVTIVLGAQFGDEGKGKITDLLSQSATLCCRAAGGHNAGHTIVHDDITYDFHILPSGLISPDCINLVGTGTVVHVPSFFKELDALKAKGLKDADKRIFISDRAQVCFDLHSVVDGLEEAILAGKKVGTTGKGIGPCYSDKASRRGVRIGEVLEKGVVESKLRALEAGYRRQFGELKYDLEDEVKRFHEYRTKLQPYVVDQMAFMHKHRSSPSVLVEGANALLLDIDHGTYPYVTSSCTGLGGAIQGLTLNPTSIKSIVGVVKAYSTRVGSGPFPTEQNNAVGEKLQRAGREFGVTTGRRRRCGWLDMVMCRYSNAINHYTVINLTKLDILDDFDEIKVAVAYQLDGKLLESFPAQADVLDKVEVKYVTLPGWKSNTMGATKWEHLPTNAQRYVEFIEREMGGVPIRWIGTGPARNHMIERI.

GTP-binding positions include 11–17 (GDEGKGK) and 39–41 (GHT). The Proton acceptor role is filled by Asp-12. Asp-12 and Gly-39 together coordinate Mg(2+). Residues 12–15 (DEGK), 37–40 (NAGH), Thr-129, Arg-143, Asn-219, Thr-234, and Arg-298 each bind IMP. The active-site Proton donor is His-40. 294–300 (VTTGRRR) lines the substrate pocket. GTP contacts are provided by residues Arg-300, 326 to 328 (KLD), and 409 to 411 (GTG).

It belongs to the adenylosuccinate synthetase family. Homodimer. It depends on Mg(2+) as a cofactor.

It is found in the cytoplasm. The catalysed reaction is IMP + L-aspartate + GTP = N(6)-(1,2-dicarboxyethyl)-AMP + GDP + phosphate + 2 H(+). It participates in purine metabolism; AMP biosynthesis via de novo pathway; AMP from IMP: step 1/2. Functionally, plays an important role in the de novo pathway and in the salvage pathway of purine nucleotide biosynthesis. Catalyzes the first committed step in the biosynthesis of AMP from IMP. This Paracoccidioides brasiliensis (strain Pb03) protein is Adenylosuccinate synthetase.